Here is a 101-residue protein sequence, read N- to C-terminus: Large ribosomal subunit protein bL28 (101 aa).

The protein belongs to the bacterial ribosomal protein bL28 family.

The chain is Large ribosomal subunit protein bL28 from Rhodopseudomonas palustris (strain ATCC BAA-98 / CGA009).